The following is a 291-amino-acid chain: ATP synthase gamma chain (291 aa).

This sequence belongs to the ATPase gamma chain family. In terms of assembly, F-type ATPases have 2 components, CF(1) - the catalytic core - and CF(0) - the membrane proton channel. CF(1) has five subunits: alpha(3), beta(3), gamma(1), delta(1), epsilon(1). CF(0) has three main subunits: a, b and c.

It is found in the cell inner membrane. Its function is as follows. Produces ATP from ADP in the presence of a proton gradient across the membrane. The gamma chain is believed to be important in regulating ATPase activity and the flow of protons through the CF(0) complex. In Rhodopseudomonas palustris (strain ATCC BAA-98 / CGA009), this protein is ATP synthase gamma chain.